Consider the following 211-residue polypeptide: Uracil phosphoribosyltransferase (211 aa).

5-phospho-alpha-D-ribose 1-diphosphate contacts are provided by residues Arg-77, Arg-102, and 129–137 (DPMLATGGS). Uracil is bound by residues Ile-192 and 197-199 (GDA). Asp-198 is a binding site for 5-phospho-alpha-D-ribose 1-diphosphate.

Belongs to the UPRTase family. Requires Mg(2+) as cofactor.

The catalysed reaction is UMP + diphosphate = 5-phospho-alpha-D-ribose 1-diphosphate + uracil. The protein operates within pyrimidine metabolism; UMP biosynthesis via salvage pathway; UMP from uracil: step 1/1. Its activity is regulated as follows. Allosterically activated by GTP. Catalyzes the conversion of uracil and 5-phospho-alpha-D-ribose 1-diphosphate (PRPP) to UMP and diphosphate. The sequence is that of Uracil phosphoribosyltransferase from Corynebacterium aurimucosum (strain ATCC 700975 / DSM 44827 / CIP 107346 / CN-1) (Corynebacterium nigricans).